A 436-amino-acid polypeptide reads, in one-letter code: ATP-dependent protease ATPase subunit HslU (436 aa).

ATP-binding positions include Ile18, Gly60–Glu65, Asp250, Glu314, and Arg386.

This sequence belongs to the ClpX chaperone family. HslU subfamily. In terms of assembly, a double ring-shaped homohexamer of HslV is capped on each side by a ring-shaped HslU homohexamer. The assembly of the HslU/HslV complex is dependent on binding of ATP.

It localises to the cytoplasm. Functionally, ATPase subunit of a proteasome-like degradation complex; this subunit has chaperone activity. The binding of ATP and its subsequent hydrolysis by HslU are essential for unfolding of protein substrates subsequently hydrolyzed by HslV. HslU recognizes the N-terminal part of its protein substrates and unfolds these before they are guided to HslV for hydrolysis. This Mesorhizobium japonicum (strain LMG 29417 / CECT 9101 / MAFF 303099) (Mesorhizobium loti (strain MAFF 303099)) protein is ATP-dependent protease ATPase subunit HslU.